The primary structure comprises 436 residues: UDP-N-acetylmuramate--L-alanine ligase (436 aa).

Residue 108-114 (GAHGKTS) participates in ATP binding.

Belongs to the MurCDEF family.

The protein localises to the cytoplasm. It carries out the reaction UDP-N-acetyl-alpha-D-muramate + L-alanine + ATP = UDP-N-acetyl-alpha-D-muramoyl-L-alanine + ADP + phosphate + H(+). Its pathway is cell wall biogenesis; peptidoglycan biosynthesis. In terms of biological role, cell wall formation. This Bacillus cereus (strain B4264) protein is UDP-N-acetylmuramate--L-alanine ligase.